We begin with the raw amino-acid sequence, 299 residues long: UDP-N-acetylenolpyruvoylglucosamine reductase (299 aa).

Residues 26-191 form the FAD-binding PCMH-type domain; sequence GIGGPAKYFV…VSATFQLNAS (166 aa). Residue Arg-170 is part of the active site. The Proton donor role is filled by Cys-218. Glu-288 is a catalytic residue.

It belongs to the MurB family. FAD serves as cofactor.

It localises to the cytoplasm. It carries out the reaction UDP-N-acetyl-alpha-D-muramate + NADP(+) = UDP-N-acetyl-3-O-(1-carboxyvinyl)-alpha-D-glucosamine + NADPH + H(+). It participates in cell wall biogenesis; peptidoglycan biosynthesis. Its function is as follows. Cell wall formation. This is UDP-N-acetylenolpyruvoylglucosamine reductase from Protochlamydia amoebophila (strain UWE25).